The sequence spans 264 residues: S-adenosylmethionine decarboxylase proenzyme (264 aa).

Ser-114 acts as the Schiff-base intermediate with substrate; via pyruvic acid in catalysis. Ser-114 bears the Pyruvic acid (Ser); by autocatalysis mark. His-119 acts as the Proton acceptor; for processing activity in catalysis. The Proton donor; for catalytic activity role is filled by Cys-142.

The protein belongs to the prokaryotic AdoMetDC family. Type 2 subfamily. As to quaternary structure, heterooctamer of four alpha and four beta chains arranged as a tetramer of alpha/beta heterodimers. Pyruvate serves as cofactor. Is synthesized initially as an inactive proenzyme. Formation of the active enzyme involves a self-maturation process in which the active site pyruvoyl group is generated from an internal serine residue via an autocatalytic post-translational modification. Two non-identical subunits are generated from the proenzyme in this reaction, and the pyruvate is formed at the N-terminus of the alpha chain, which is derived from the carboxyl end of the proenzyme. The post-translation cleavage follows an unusual pathway, termed non-hydrolytic serinolysis, in which the side chain hydroxyl group of the serine supplies its oxygen atom to form the C-terminus of the beta chain, while the remainder of the serine residue undergoes an oxidative deamination to produce ammonia and the pyruvoyl group blocking the N-terminus of the alpha chain.

It carries out the reaction S-adenosyl-L-methionine + H(+) = S-adenosyl 3-(methylsulfanyl)propylamine + CO2. The protein operates within amine and polyamine biosynthesis; S-adenosylmethioninamine biosynthesis; S-adenosylmethioninamine from S-adenosyl-L-methionine: step 1/1. Functionally, catalyzes the decarboxylation of S-adenosylmethionine to S-adenosylmethioninamine (dcAdoMet), the propylamine donor required for the synthesis of the polyamines spermine and spermidine from the diamine putrescine. This chain is S-adenosylmethionine decarboxylase proenzyme, found in Chromohalobacter salexigens (strain ATCC BAA-138 / DSM 3043 / CIP 106854 / NCIMB 13768 / 1H11).